We begin with the raw amino-acid sequence, 471 residues long: Argininosuccinate lyase (471 aa).

Belongs to the lyase 1 family. Argininosuccinate lyase subfamily.

The protein resides in the cytoplasm. It carries out the reaction 2-(N(omega)-L-arginino)succinate = fumarate + L-arginine. Its pathway is amino-acid biosynthesis; L-arginine biosynthesis; L-arginine from L-ornithine and carbamoyl phosphate: step 3/3. The sequence is that of Argininosuccinate lyase from Renibacterium salmoninarum (strain ATCC 33209 / DSM 20767 / JCM 11484 / NBRC 15589 / NCIMB 2235).